The following is a 362-amino-acid chain: Sterol-4-alpha-carboxylate 3-dehydrogenase, decarboxylating (362 aa).

Residue M1 is modified to N-acetylmethionine. Y161 (proton acceptor) is an active-site residue. NAD(+) is bound at residue K165. A helical membrane pass occupies residues 287–307 (WMAYYLAFLLSLLVMVVSPLI). The Prevents secretion from ER motif lies at 359-362 (RKDK).

This sequence belongs to the 3-beta-HSD family. In terms of assembly, homodimer.

The protein resides in the endoplasmic reticulum membrane. It is found in the lipid droplet. It catalyses the reaction a 3beta-hydroxysteroid-4alpha-carboxylate + NADP(+) = a 3-oxosteroid + CO2 + NADPH. The enzyme catalyses a 3beta-hydroxysteroid-4alpha-carboxylate + NAD(+) = a 3-oxosteroid + CO2 + NADH. The catalysed reaction is 4alpha-carboxyzymosterol + NADP(+) = zymosterone + CO2 + NADPH. It carries out the reaction 4alpha-carboxy-4beta-methyl-5alpha-cholest-8-en-3beta-ol + NADP(+) = 4alpha-methyl-5alpha-cholest-8-en-3-one + CO2 + NADPH. It catalyses the reaction 4alpha-carboxy-5alpha-cholest-8-ene-3beta-ol + NADP(+) = 5alpha-cholest-8-en-3-one + CO2 + NADPH. The enzyme catalyses 4beta-methylzymosterol-4alpha-carboxylate + NADP(+) = 3-dehydro-4-methylzymosterol + CO2 + NADPH. The catalysed reaction is 4beta-methylzymosterol-4alpha-carboxylate + NAD(+) = 3-dehydro-4-methylzymosterol + CO2 + NADH. It carries out the reaction 4alpha-carboxy-5alpha-cholest-8-ene-3beta-ol + NAD(+) = 5alpha-cholest-8-en-3-one + CO2 + NADH. It catalyses the reaction 4alpha-carboxy-4beta-methyl-5alpha-cholest-8-en-3beta-ol + NAD(+) = 4alpha-methyl-5alpha-cholest-8-en-3-one + CO2 + NADH. The enzyme catalyses 4alpha-carboxyzymosterol + NAD(+) = zymosterone + CO2 + NADH. The protein operates within steroid biosynthesis; zymosterol biosynthesis; zymosterol from lanosterol: step 4/6. Catalyzes the NAD(P)(+)-dependent oxidative decarboxylation of the C4 methyl groups of 4-alpha-carboxysterols in post-squalene cholesterol biosynthesis. Plays a role in the regulation of the endocytic trafficking of EGFR. The chain is Sterol-4-alpha-carboxylate 3-dehydrogenase, decarboxylating (Nsdhl) from Mus musculus (Mouse).